Consider the following 190-residue polypeptide: Putative phosphatidylethanolamine-binding protein (190 aa).

Belongs to the phosphatidylethanolamine-binding protein family.

The polypeptide is Putative phosphatidylethanolamine-binding protein (Plasmodium falciparum).